The primary structure comprises 532 residues: MGWFNKIFKGSNQRLRVGNNKHNHNVYYDNYPTASHDDEPSAADTDADNDEPHHTQEPSTSEDNTSNDQENEDIDRAIALSLLEENQEQTSISGKYSMPVDEDEQLARALQESMVVGNSPRHKSGSTYDNGNAYGAGDLYGNGHMYGGGNVYANGDIYYPRPITFQMDFRICAGCNMEIGHGRFLNCLNSLWHPECFRCYGCSQPISEYEFSTSGNYPFHKACYRERYHPKCDVCSHFIPTNHAGLIEYRAHPFWVQKYCPSHEHDATPRCCSCERMEPRNTRYVELNDGRKLCLECLDSAVMDTMQCQPLYLQIQNFYEGLNMKVEQEVPLLLVERQALNEAREGEKNGHYHMPETRGLCLSEEQTVSTVRKRSKHGTGKWAGNITEPYKLTRQCEVTAILILFGLPRLLTGSILAHEMMHAWMRLKGFRTLSQDVEEGICQVMAHKWLDAELAAGSTNSNAASSSSSSQGLKKGPRSQYERKLGEFFKHQIESDASPVYGDGFRAGRLAVHKYGLRKTLEHIQMTGRFPV.

The segment at 26–71 is disordered; sequence VYYDNYPTASHDDEPSAADTDADNDEPHHTQEPSTSEDNTSNDQEN. Residues 57–68 show a composition bias toward polar residues; it reads EPSTSEDNTSND. Positions 69–88 constitute a UIM 1 domain; the sequence is QENEDIDRAIALSLLEENQE. A Glycyl lysine isopeptide (Lys-Gly) (interchain with G-Cter in ubiquitin) cross-link involves residue Lys-95. In terms of domain architecture, UIM 2 spans 101–120; that stretch reads DEDEQLARALQESMVVGNSP. The LIM zinc-binding domain maps to 170-230; it reads RICAGCNMEI…KACYRERYHP (61 aa). Residues Lys-221, Lys-348, Lys-376, Lys-381, Lys-391, Lys-474, Lys-475, and Lys-519 each participate in a glycyl lysine isopeptide (Lys-Gly) (interchain with G-Cter in ubiquitin) cross-link.

As to quaternary structure, interacts with ubiquitin. Interacts (via C-terminus) with DA2. Interacts with BB. Interacts with UBP15. Interacts with TCP14 and TCP15. Post-translationally, ubiquitinated at Lys-95, Lys-221, Lys-348, Lys-376, Lys-381, Lys-391, Lys-474, Lys-475 and Lys-519 by the E3 ubiquitin-protein ligases BB and DA2.

Ubiquitin receptor that limits final seed and organ size by restricting the period of cell proliferation. May act maternally to control seed mass. Acts synergistically with DA2 to regulate seed size. Functions synergistically with DA2 to restrict cell proliferation in the maternal integuments of ovules and developing seeds. Functions antagonistically in a common pathway with UBP15 to regulate seed size. Associates physically with UBP15 and modulates the stability of UBP15, which promote cell proliferation in the integuments of ovules and developing seeds. Functions as a peptidase and cleaves the N-terminal sequence of E3 ubiquitin-protein ligases BB and DA2 in a ubiquitin-dependent manner. Cleaves the deubiquitinating enzyme UBP15, which promotes cell proliferation, and the transcription factors TCP15 and TCP22, which promote cell proliferation and repress endoreduplication. Involved in the promotion of leaf senescence, in addition to its function in restricting plant growth. Acts redundantly with DAR1 and DAR2 to regulate endoreduplication during leaf development. Together with DAR1 and DAR2, modulates the protein stability of the transcription factors TCP14 and TCP15, which repress endoreduplication by directly regulating the expression of cell-cycle genes. This is Protein DA1 (DA1) from Arabidopsis thaliana (Mouse-ear cress).